A 126-amino-acid chain; its full sequence is Copper resistance protein C (126 aa).

An N-terminal signal peptide occupies residues Met1–Ala23. Cu(2+) is bound at residue His24. Cu(+) contacts are provided by Met63, Met66, Met69, His72, and Met75. His115 serves as a coordination point for Cu(2+).

It belongs to the CopC family. Monomer-dimer equilibrium in solution for the apo protein. Dimerization is significantly enhanced upon binding of copper(I).

It is found in the periplasm. In terms of biological role, copper-binding protein involved in copper resistance. This Escherichia coli protein is Copper resistance protein C.